Here is a 181-residue protein sequence, read N- to C-terminus: Inner membrane-spanning protein YciB (181 aa).

Transmembrane regions (helical) follow at residues 22–42, 50–70, 80–100, 122–142, and 148–168; these read IYTA…VTYA, MQLI…FLHD, IVYC…KPVI, WVLF…EMPL, and FKVF…GMYV.

The protein belongs to the YciB family.

Its subcellular location is the cell inner membrane. In terms of biological role, plays a role in cell envelope biogenesis, maintenance of cell envelope integrity and membrane homeostasis. In Aliivibrio fischeri (strain ATCC 700601 / ES114) (Vibrio fischeri), this protein is Inner membrane-spanning protein YciB.